Consider the following 249-residue polypeptide: MSVTMRQMLEAGCHFGHQTRFWSPKMAPFIFGHRNKIHIINLEKTLPMFQDALKFTKQVAANRGTILFVGTKRQSREIIAEEAARAGMPYIDSRWLGGTLTNFKTVKGSLKRLKDMEVAKEAGDWEKLSRKEALTNDRDLDKLQKALGGIKDLNGIPDAIFVVDVGYHKIAITEANKLGIPVIAVVDTNHSPEGVDYIIPGNDDSSKAVILYAHGIANAILEGKANSVQEILTAVKEGEEEFVEEGKVE.

The protein belongs to the universal ribosomal protein uS2 family.

This is Small ribosomal subunit protein uS2 from Polynucleobacter necessarius subsp. necessarius (strain STIR1).